The chain runs to 122 residues: Nodulation protein NolR (122 aa).

In terms of domain architecture, HTH arsR-type spans 15–109 (EKHEDAEIAA…ALSDIYGDDT (95 aa)). Residues 49–68 (VGALAHKVGLSQSALSQHLS) constitute a DNA-binding region (H-T-H motif).

Binds to the operator site in homodimeric form.

Its function is as follows. Negative transacting factor controlling the nod regulon. May control the expression of nodD1, nodD2, nodD3 and nodABC genes. This chain is Nodulation protein NolR (nolR), found in Rhizobium meliloti (Ensifer meliloti).